A 222-amino-acid polypeptide reads, in one-letter code: Charged multivesicular body protein 4a (222 aa).

Disordered stretches follow at residues 1–21 and 180–211; these read MSGLGRLFGKGKKEKGPTPEE and VGDKEEEPSVKLPSVPSTHLPAGPAPKVDEDE. An interaction with phosphoinosides region spans residues 1–116; sequence MSGLGRLFGK…ELAAQSMKKA (116 aa). An intramolecular interaction with C-terminus region spans residues 1–150; sequence MSGLGRLFGK…QISDAISRPM (150 aa). Coiled coils occupy residues 20–105 and 155–180; these read EEAI…VLRT and DVDEDELLEELEELEQEELAQELLNV. Positions 151–222 are intramolecular interaction with N-terminus; it reads GFGDDVDEDE…ALKQLAEWVS (72 aa). Serine 196 carries the phosphoserine modification.

It belongs to the SNF7 family. As to quaternary structure, probable core component of the endosomal sorting required for transport complex III (ESCRT-III). ESCRT-III components are thought to multimerize to form a flat lattice on the perimeter membrane of the endosome. Several assembly forms of ESCRT-III may exist that interact and act sequentially. Self-associates; overexpression leads to the assembly of filaments that curve and associate to create circular rings. Interacts with CHMP2A. Interacts with CHMP3; the interaction requires the release of CHMP4A autoinhibition. Interacts with CHMP4B. Interacts with CHMP4C. Interacts with CHMP6. Interacts with VPS4A. Interacts with PDCD6IP; the interaction is direct. Widely expressed. Expressed at higher level in heart, kidney, liver and skeletal muscle. Also expressed in brain, placenta, lung and pancreas.

The protein resides in the cytoplasmic vesicle membrane. Its subcellular location is the late endosome membrane. In terms of biological role, probable core component of the endosomal sorting required for transport complex III (ESCRT-III) which is involved in multivesicular bodies (MVBs) formation and sorting of endosomal cargo proteins into MVBs. MVBs contain intraluminal vesicles (ILVs) that are generated by invagination and scission from the limiting membrane of the endosome and mostly are delivered to lysosomes enabling degradation of membrane proteins, such as stimulated growth factor receptors, lysosomal enzymes and lipids. The MVB pathway appears to require the sequential function of ESCRT-O, -I,-II and -III complexes. ESCRT-III proteins mostly dissociate from the invaginating membrane before the ILV is released. The ESCRT machinery also functions in topologically equivalent membrane fission events, such as the terminal stages of cytokinesis and the budding of enveloped viruses (HIV-1 and other lentiviruses). ESCRT-III proteins are believed to mediate the necessary vesicle extrusion and/or membrane fission activities, possibly in conjunction with the AAA ATPase VPS4. When overexpressed, membrane-assembled circular arrays of CHMP4A filaments can promote or stabilize negative curvature and outward budding. Via its interaction with PDCD6IP involved in HIV-1 p6- and p9-dependent virus release. CHMP4A/B/C are required for the exosomal release of SDCBP, CD63 and syndecan. The polypeptide is Charged multivesicular body protein 4a (CHMP4A) (Homo sapiens (Human)).